The following is a 142-amino-acid chain: HTH-type transcriptional regulator MntR (142 aa).

The HTH dtxR-type domain maps to 1–63 (MPTPSMEDYI…YEKYRGLVLT (63 aa)). Positions 8, 11, 77, 99, 102, and 103 each coordinate Mn(2+).

This sequence belongs to the DtxR/MntR family. Homodimer.

It is found in the cytoplasm. Its activity is regulated as follows. DNA binding is strongly activated by Mn(2+). In terms of biological role, central regulator of manganese homeostasis. This Bacillus cereus (strain ATCC 14579 / DSM 31 / CCUG 7414 / JCM 2152 / NBRC 15305 / NCIMB 9373 / NCTC 2599 / NRRL B-3711) protein is HTH-type transcriptional regulator MntR.